We begin with the raw amino-acid sequence, 624 residues long: Probable potassium transport system protein Kup 1 (624 aa).

Helical transmembrane passes span 10-30 (LALGALGVVFGDIGTSPLYAL), 48-68 (LSLIFWSLIIIVSFKYLMIIF), 94-114 (PLFYIVAIFGAGLLLGDGMLT), 133-153 (LYPYVLPIASVILVLLFSLQA), 159-179 (IGYLFGPLILIWFITIAILGI), 210-230 (FLLGGIFLVVTGGEALFADIG), 242-262 (FFIALPCLLLNYFGQGANLIV), 270-290 (PFFMIAPPWFYLPLIIIATVA), 331-351 (IYVPQINFILFIGTMAFCLAF), 363-383 (IAVNLEMLLVDAMVAYAAVSI), 388-408 (TFNVIFLFGLFLLIDLAFLGA), and 413-433 (FITGGWVPIVLAFFIAFIMYS).

The protein belongs to the HAK/KUP transporter (TC 2.A.72) family.

The protein resides in the cell inner membrane. The enzyme catalyses K(+)(in) + H(+)(in) = K(+)(out) + H(+)(out). Its function is as follows. Transport of potassium into the cell. Likely operates as a K(+):H(+) symporter. The chain is Probable potassium transport system protein Kup 1 from Legionella pneumophila subsp. pneumophila (strain Philadelphia 1 / ATCC 33152 / DSM 7513).